A 445-amino-acid chain; its full sequence is Probable aminotransferase TAT3 (445 aa).

The protein belongs to the class-I pyridoxal-phosphate-dependent aminotransferase family. It depends on pyridoxal 5'-phosphate as a cofactor. In terms of tissue distribution, expressed in roots, leaves and cauline leaves.

The polypeptide is Probable aminotransferase TAT3 (TAT3) (Arabidopsis thaliana (Mouse-ear cress)).